A 446-amino-acid chain; its full sequence is Methionine aminopeptidase 2 (446 aa).

Residues 1 to 91 (MAAQVTDALK…PPRVLLSNLF (91 aa)) are disordered. Residues 36 to 48 (EAEDSDDEEEEPV) are compositionally biased toward acidic residues. Over residues 59–72 (KKKRKRKKKPKKKA) the composition is skewed to basic residues. His199 is a binding site for substrate. Residues Asp219, Asp230, and His299 each contribute to the a divalent metal cation site. A substrate-binding site is contributed by His307. A divalent metal cation is bound by residues Glu332 and Glu427.

It belongs to the peptidase M24A family. Methionine aminopeptidase eukaryotic type 2 subfamily. Requires Co(2+) as cofactor. It depends on Zn(2+) as a cofactor. Mn(2+) serves as cofactor. The cofactor is Fe(2+).

The protein localises to the cytoplasm. The catalysed reaction is Release of N-terminal amino acids, preferentially methionine, from peptides and arylamides.. Cotranslationally removes the N-terminal methionine from nascent proteins. The N-terminal methionine is often cleaved when the second residue in the primary sequence is small and uncharged (Met-Ala-, Cys, Gly, Pro, Ser, Thr, or Val). The protein is Methionine aminopeptidase 2 of Sclerotinia sclerotiorum (strain ATCC 18683 / 1980 / Ss-1) (White mold).